A 279-amino-acid polypeptide reads, in one-letter code: Phosphatidylglycerol--prolipoprotein diacylglyceryl transferase (279 aa).

7 helical membrane passes run 22–42 (SAHWYGLMYLIGFYFIMWSSI), 58–78 (ILYFSFLNALIGGRIGYVIFY), 89–109 (FIFKVWEGGMSFHGGLLGSII), 128–148 (FLVPLIPFGLGFGRIGNFING), 195–215 (ISQLYEMFLEGILLFIILNIF), 223–243 (GYMSGLFLILYGSFRIIAEFF), and 256–276 (YISLGQILSIPMILYGLILII). R141 is a binding site for a 1,2-diacyl-sn-glycero-3-phospho-(1'-sn-glycerol).

Belongs to the Lgt family.

It localises to the cell membrane. It catalyses the reaction L-cysteinyl-[prolipoprotein] + a 1,2-diacyl-sn-glycero-3-phospho-(1'-sn-glycerol) = an S-1,2-diacyl-sn-glyceryl-L-cysteinyl-[prolipoprotein] + sn-glycerol 1-phosphate + H(+). It functions in the pathway protein modification; lipoprotein biosynthesis (diacylglyceryl transfer). In terms of biological role, catalyzes the transfer of the diacylglyceryl group from phosphatidylglycerol to the sulfhydryl group of the N-terminal cysteine of a prolipoprotein, the first step in the formation of mature lipoproteins. The protein is Phosphatidylglycerol--prolipoprotein diacylglyceryl transferase of Wigglesworthia glossinidia brevipalpis.